The primary structure comprises 647 residues: Threonine--tRNA ligase (647 aa).

Residues 1–61 form the TGS domain; sequence MIKITFPDGA…EEDGSIEIVT (61 aa). The catalytic stretch occupies residues 240–538; that stretch reads DHRKLGKELD…LIETYKGAFP (299 aa). Cys334, His385, and His515 together coordinate Zn(2+).

It belongs to the class-II aminoacyl-tRNA synthetase family. Homodimer. Requires Zn(2+) as cofactor.

It localises to the cytoplasm. It carries out the reaction tRNA(Thr) + L-threonine + ATP = L-threonyl-tRNA(Thr) + AMP + diphosphate + H(+). Its function is as follows. Catalyzes the attachment of threonine to tRNA(Thr) in a two-step reaction: L-threonine is first activated by ATP to form Thr-AMP and then transferred to the acceptor end of tRNA(Thr). Also edits incorrectly charged L-seryl-tRNA(Thr). The polypeptide is Threonine--tRNA ligase (Streptococcus pyogenes serotype M1).